Consider the following 200-residue polypeptide: Large ribosomal subunit protein uL4 (200 aa).

Residues 38-68 (GRQGSKQQKTRSDVRGGGKRPWRQKGTGRAR) are disordered. Residues 54-65 (GGKRPWRQKGTG) are compositionally biased toward basic residues.

It belongs to the universal ribosomal protein uL4 family. As to quaternary structure, part of the 50S ribosomal subunit.

Its function is as follows. One of the primary rRNA binding proteins, this protein initially binds near the 5'-end of the 23S rRNA. It is important during the early stages of 50S assembly. It makes multiple contacts with different domains of the 23S rRNA in the assembled 50S subunit and ribosome. In terms of biological role, forms part of the polypeptide exit tunnel. The chain is Large ribosomal subunit protein uL4 from Pseudomonas savastanoi pv. phaseolicola (strain 1448A / Race 6) (Pseudomonas syringae pv. phaseolicola (strain 1448A / Race 6)).